Consider the following 169-residue polypeptide: Transcription antitermination protein NusB (169 aa).

It belongs to the NusB family.

Involved in transcription antitermination. Required for transcription of ribosomal RNA (rRNA) genes. Binds specifically to the boxA antiterminator sequence of the ribosomal RNA (rrn) operons. The polypeptide is Transcription antitermination protein NusB (Deinococcus geothermalis (strain DSM 11300 / CIP 105573 / AG-3a)).